The following is a 207-amino-acid chain: Mediator of RNA polymerase II transcription subunit 21 (207 aa).

Positions 36–120 (IPPPDVPDAA…APDSPRTFAS (85 aa)) are disordered. Low complexity predominate over residues 91–108 (GEGAQTPGPAAGAGADPN). The stretch at 146–194 (IDSSEAEQEKRIRELEGELRQVEEERELKMRELKRLRRTLENVLTAVET) forms a coiled coil.

This sequence belongs to the Mediator complex subunit 21 family. In terms of assembly, component of the Mediator complex.

Its subcellular location is the nucleus. Functionally, component of the Mediator complex, a coactivator involved in the regulated transcription of nearly all RNA polymerase II-dependent genes. Mediator functions as a bridge to convey information from gene-specific regulatory proteins to the basal RNA polymerase II transcription machinery. Mediator is recruited to promoters by direct interactions with regulatory proteins and serves as a scaffold for the assembly of a functional preinitiation complex with RNA polymerase II and the general transcription factors. In Aspergillus fumigatus (strain ATCC MYA-4609 / CBS 101355 / FGSC A1100 / Af293) (Neosartorya fumigata), this protein is Mediator of RNA polymerase II transcription subunit 21 (srb7).